Reading from the N-terminus, the 233-residue chain is Octanoyltransferase (233 aa).

The region spanning 34 to 212 (PDRPDVLLLL…AFAQTFELDL (179 aa)) is the BPL/LPL catalytic domain. Residues 76-83 (RGGEVTHH), 143-145 (AIG), and 156-158 (GFA) contribute to the substrate site. The Acyl-thioester intermediate role is filled by Cys174.

Belongs to the LipB family.

The protein resides in the cytoplasm. It catalyses the reaction octanoyl-[ACP] + L-lysyl-[protein] = N(6)-octanoyl-L-lysyl-[protein] + holo-[ACP] + H(+). It functions in the pathway protein modification; protein lipoylation via endogenous pathway; protein N(6)-(lipoyl)lysine from octanoyl-[acyl-carrier-protein]: step 1/2. Functionally, catalyzes the transfer of endogenously produced octanoic acid from octanoyl-acyl-carrier-protein onto the lipoyl domains of lipoate-dependent enzymes. Lipoyl-ACP can also act as a substrate although octanoyl-ACP is likely to be the physiological substrate. This is Octanoyltransferase from Synechococcus elongatus (strain ATCC 33912 / PCC 7942 / FACHB-805) (Anacystis nidulans R2).